The primary structure comprises 296 residues: Diheme cytochrome c-type (296 aa).

Cys-52, Cys-55, His-56, Cys-202, Cys-205, and His-206 together coordinate heme c.

In terms of processing, binds 2 heme c groups covalently per subunit.

The protein resides in the cell membrane. Its function is as follows. Particularly expressed when cells generate energy via aerobic respiration. This is Diheme cytochrome c-type (cycG) from Cereibacter sphaeroides (strain ATCC 17023 / DSM 158 / JCM 6121 / CCUG 31486 / LMG 2827 / NBRC 12203 / NCIMB 8253 / ATH 2.4.1.) (Rhodobacter sphaeroides).